Consider the following 78-residue polypeptide: Small ribosomal subunit protein uS19m (78 aa).

It belongs to the universal ribosomal protein uS19 family.

It is found in the mitochondrion. In Acanthamoeba castellanii (Amoeba), this protein is Small ribosomal subunit protein uS19m (RPS19).